A 292-amino-acid chain; its full sequence is Ribosomal RNA small subunit methyltransferase A (292 aa).

S-adenosyl-L-methionine is bound by residues N28, L30, G55, E76, D101, and N126.

The protein belongs to the class I-like SAM-binding methyltransferase superfamily. rRNA adenine N(6)-methyltransferase family. RsmA subfamily.

It localises to the cytoplasm. The catalysed reaction is adenosine(1518)/adenosine(1519) in 16S rRNA + 4 S-adenosyl-L-methionine = N(6)-dimethyladenosine(1518)/N(6)-dimethyladenosine(1519) in 16S rRNA + 4 S-adenosyl-L-homocysteine + 4 H(+). Functionally, specifically dimethylates two adjacent adenosines (A1518 and A1519) in the loop of a conserved hairpin near the 3'-end of 16S rRNA in the 30S particle. May play a critical role in biogenesis of 30S subunits. This is Ribosomal RNA small subunit methyltransferase A from Bacillus cytotoxicus (strain DSM 22905 / CIP 110041 / 391-98 / NVH 391-98).